Here is a 326-residue protein sequence, read N- to C-terminus: Delta-aminolevulinic acid dehydratase (326 aa).

3 residues coordinate Zn(2+): cysteine 125, cysteine 127, and cysteine 135. Catalysis depends on lysine 200, which acts as the Schiff-base intermediate with substrate. Positions 210 and 222 each coordinate 5-aminolevulinate. A Mg(2+)-binding site is contributed by glutamate 238. The active-site Schiff-base intermediate with substrate is the lysine 253. A 5-aminolevulinate-binding site is contributed by serine 279.

It belongs to the ALAD family. In terms of assembly, homooctamer. Zn(2+) serves as cofactor.

It carries out the reaction 2 5-aminolevulinate = porphobilinogen + 2 H2O + H(+). Its pathway is porphyrin-containing compound metabolism; protoporphyrin-IX biosynthesis; coproporphyrinogen-III from 5-aminolevulinate: step 1/4. Catalyzes an early step in the biosynthesis of tetrapyrroles. Binds two molecules of 5-aminolevulinate per subunit, each at a distinct site, and catalyzes their condensation to form porphobilinogen. The sequence is that of Delta-aminolevulinic acid dehydratase (hemB) from Methanothermobacter thermautotrophicus (strain ATCC 29096 / DSM 1053 / JCM 10044 / NBRC 100330 / Delta H) (Methanobacterium thermoautotrophicum).